Consider the following 110-residue polypeptide: MIRKRQSGSNKSVSSGNNQEVTRVRTPRKDRNEVLATVASLLGSKRVTLQCMDGVVRMGRIPGSKNKKMWVREGDVVIANPWEIQDSKADVIWKYTKPQVDWLERKGYLN.

Positions 1–29 (MIRKRQSGSNKSVSSGNNQEVTRVRTPRK) are disordered. Positions 7 to 18 (SGSNKSVSSGNN) are enriched in low complexity. One can recognise an S1-like domain in the interval 22 to 96 (TRVRTPRKDR…SKADVIWKYT (75 aa)).

This sequence belongs to the eIF-1A family.

Its function is as follows. Seems to be required for maximal rate of protein biosynthesis. Enhances ribosome dissociation into subunits and stabilizes the binding of the initiator Met-tRNA(I) to 40 S ribosomal subunits. In Methanosarcina acetivorans (strain ATCC 35395 / DSM 2834 / JCM 12185 / C2A), this protein is Translation initiation factor 1A 3 (eIF1A3).